The chain runs to 482 residues: Wax ester synthase/diacylglycerol acyltransferase 9 (482 aa).

Residues 1 to 195 are Cytoplasmic-facing; that stretch reads MEKKMKEEEE…FRLVLVVCST (195 aa). The active-site Proton acceptor is the His140. The helical transmembrane segment at 196–216 threads the bilayer; the sequence is VRLIWNTLVDSFLCMATIFFL. Over 217–328 the chain is Lumenal; that stretch reads KDTDTPLKGK…AKGSKCRWGN (112 aa). A helical transmembrane segment spans residues 329-349; it reads YISVILFPFTIALQSDPLVYL. The Cytoplasmic segment spans residues 350–366; that stretch reads SNVKSMIDRKKNSLITY. Residues 367–387 form a helical membrane-spanning segment; the sequence is IIYTFSEFVIKAFGINVAVAF. Residues 388–482 are Lumenal-facing; sequence QRKIMLNTTM…LEKGLPNHVN (95 aa). Asn394 carries an N-linked (GlcNAc...) asparagine glycan.

This sequence in the N-terminal section; belongs to the long-chain O-acyltransferase family. As to expression, mostly expressed in stems and siliques.

It is found in the cell membrane. The protein resides in the endoplasmic reticulum membrane. The catalysed reaction is an acyl-CoA + a 1,2-diacyl-sn-glycerol = a triacyl-sn-glycerol + CoA. It carries out the reaction a long chain fatty alcohol + a fatty acyl-CoA = a wax ester + CoA. Its pathway is glycerolipid metabolism; triacylglycerol biosynthesis. It functions in the pathway lipid metabolism. Its function is as follows. Bifunctional wax ester synthase/diacylglycerol acyltransferase. Involved in cuticular wax biosynthesis. This is Wax ester synthase/diacylglycerol acyltransferase 9 from Arabidopsis thaliana (Mouse-ear cress).